Consider the following 159-residue polypeptide: 2-C-methyl-D-erythritol 2,4-cyclodiphosphate synthase (159 aa).

A divalent metal cation is bound by residues aspartate 8 and histidine 10. Residues 8–10 (DVH) and 34–35 (HS) contribute to the 4-CDP-2-C-methyl-D-erythritol 2-phosphate site. Histidine 42 contributes to the a divalent metal cation binding site. 4-CDP-2-C-methyl-D-erythritol 2-phosphate is bound by residues 56–58 (DIG), 61–65 (FPDTD), 100–106 (AQAPKML), 132–135 (TTTE), phenylalanine 139, and arginine 142.

The protein belongs to the IspF family. In terms of assembly, homotrimer. It depends on a divalent metal cation as a cofactor.

It carries out the reaction 4-CDP-2-C-methyl-D-erythritol 2-phosphate = 2-C-methyl-D-erythritol 2,4-cyclic diphosphate + CMP. It participates in isoprenoid biosynthesis; isopentenyl diphosphate biosynthesis via DXP pathway; isopentenyl diphosphate from 1-deoxy-D-xylulose 5-phosphate: step 4/6. Functionally, involved in the biosynthesis of isopentenyl diphosphate (IPP) and dimethylallyl diphosphate (DMAPP), two major building blocks of isoprenoid compounds. Catalyzes the conversion of 4-diphosphocytidyl-2-C-methyl-D-erythritol 2-phosphate (CDP-ME2P) to 2-C-methyl-D-erythritol 2,4-cyclodiphosphate (ME-CPP) with a corresponding release of cytidine 5-monophosphate (CMP). The protein is 2-C-methyl-D-erythritol 2,4-cyclodiphosphate synthase of Salmonella arizonae (strain ATCC BAA-731 / CDC346-86 / RSK2980).